A 631-amino-acid chain; its full sequence is Phosphomethylpyrimidine synthase (631 aa).

Residues N239, M268, Y297, H333, 353 to 355 (SRG), 394 to 397 (DGLR), and E433 each bind substrate. Residue H437 participates in Zn(2+) binding. Y460 serves as a coordination point for substrate. H501 provides a ligand contact to Zn(2+). [4Fe-4S] cluster is bound by residues C581, C584, and C589.

Belongs to the ThiC family. As to quaternary structure, homodimer. Requires [4Fe-4S] cluster as cofactor.

It catalyses the reaction 5-amino-1-(5-phospho-beta-D-ribosyl)imidazole + S-adenosyl-L-methionine = 4-amino-2-methyl-5-(phosphooxymethyl)pyrimidine + CO + 5'-deoxyadenosine + formate + L-methionine + 3 H(+). Its pathway is cofactor biosynthesis; thiamine diphosphate biosynthesis. Functionally, catalyzes the synthesis of the hydroxymethylpyrimidine phosphate (HMP-P) moiety of thiamine from aminoimidazole ribotide (AIR) in a radical S-adenosyl-L-methionine (SAM)-dependent reaction. The chain is Phosphomethylpyrimidine synthase from Salmonella paratyphi C (strain RKS4594).